Here is a 314-residue protein sequence, read N- to C-terminus: Porphobilinogen deaminase (314 aa).

At C234 the chain carries S-(dipyrrolylmethanemethyl)cysteine.

Belongs to the HMBS family. In terms of assembly, monomer. Dipyrromethane serves as cofactor.

The enzyme catalyses 4 porphobilinogen + H2O = hydroxymethylbilane + 4 NH4(+). Its pathway is porphyrin-containing compound metabolism; protoporphyrin-IX biosynthesis; coproporphyrinogen-III from 5-aminolevulinate: step 2/4. Tetrapolymerization of the monopyrrole PBG into the hydroxymethylbilane pre-uroporphyrinogen in several discrete steps. This is Porphobilinogen deaminase from Mycobacterium marinum (strain ATCC BAA-535 / M).